We begin with the raw amino-acid sequence, 1380 residues long: DNA-directed RNA polymerase subunit beta (1380 aa).

It belongs to the RNA polymerase beta chain family. In terms of assembly, the RNAP catalytic core consists of 2 alpha, 1 beta, 1 beta' and 1 omega subunit. When a sigma factor is associated with the core the holoenzyme is formed, which can initiate transcription.

It carries out the reaction RNA(n) + a ribonucleoside 5'-triphosphate = RNA(n+1) + diphosphate. Functionally, DNA-dependent RNA polymerase catalyzes the transcription of DNA into RNA using the four ribonucleoside triphosphates as substrates. This Ehrlichia ruminantium (strain Welgevonden) protein is DNA-directed RNA polymerase subunit beta.